The chain runs to 468 residues: Glutamate--tRNA ligase (468 aa).

Residues 8–18 (PSPTGFLHVGG) carry the 'HIGH' region motif. Residues Cys97, Cys99, Cys124, and Asp126 each contribute to the Zn(2+) site. The 'KMSKS' region signature appears at 236–240 (KLSKR). Residue Lys239 participates in ATP binding.

Belongs to the class-I aminoacyl-tRNA synthetase family. Glutamate--tRNA ligase type 1 subfamily. In terms of assembly, monomer. Requires Zn(2+) as cofactor.

The protein localises to the cytoplasm. The enzyme catalyses tRNA(Glu) + L-glutamate + ATP = L-glutamyl-tRNA(Glu) + AMP + diphosphate. Its function is as follows. Catalyzes the attachment of glutamate to tRNA(Glu) in a two-step reaction: glutamate is first activated by ATP to form Glu-AMP and then transferred to the acceptor end of tRNA(Glu). This chain is Glutamate--tRNA ligase, found in Francisella tularensis subsp. tularensis (strain SCHU S4 / Schu 4).